The primary structure comprises 275 residues: MAALDGLPPLRDVIQRHGLDAKKALGQNFLLDLNITQKVARTAGDLTNATVFEVGPGPGGLTRALLALGAKKVIAIERDSRCLPALAEISDHYPGRLEVIEGDALKTDFEAMAPDGPVKIVANLPYNVGTQLLINWLMPRQWPPFWDSLTLMFQKEVGQRIVAEADDDHYGRLGVLCGWRTEAHMAFDLSPQAFTPPPKVTSTVVHLTPRPAPIPCEIAKLEKLTQAAFGQRRKMLRASLKPLGGEALLNRAEIDPSRRAETLSVEEFCRIANLL.

6 residues coordinate S-adenosyl-L-methionine: Asn-28, Leu-30, Gly-55, Glu-77, Asp-103, and Asn-123.

The protein belongs to the class I-like SAM-binding methyltransferase superfamily. rRNA adenine N(6)-methyltransferase family. RsmA subfamily.

The protein localises to the cytoplasm. It catalyses the reaction adenosine(1518)/adenosine(1519) in 16S rRNA + 4 S-adenosyl-L-methionine = N(6)-dimethyladenosine(1518)/N(6)-dimethyladenosine(1519) in 16S rRNA + 4 S-adenosyl-L-homocysteine + 4 H(+). In terms of biological role, specifically dimethylates two adjacent adenosines (A1518 and A1519) in the loop of a conserved hairpin near the 3'-end of 16S rRNA in the 30S particle. May play a critical role in biogenesis of 30S subunits. In Allorhizobium ampelinum (strain ATCC BAA-846 / DSM 112012 / S4) (Agrobacterium vitis (strain S4)), this protein is Ribosomal RNA small subunit methyltransferase A.